The sequence spans 423 residues: 3-phosphoshikimate 1-carboxyvinyltransferase (423 aa).

3 residues coordinate 3-phosphoshikimate: Lys-28, Ser-29, and Arg-33. Lys-28 is a phosphoenolpyruvate binding site. Phosphoenolpyruvate contacts are provided by Gly-96 and Arg-124. 6 residues coordinate 3-phosphoshikimate: Ser-169, Ser-170, Gln-171, Ser-198, Glu-312, and His-339. Gln-171 contacts phosphoenolpyruvate. Glu-312 functions as the Proton acceptor in the catalytic mechanism. Residues Arg-343, Arg-384, and Lys-409 each coordinate phosphoenolpyruvate.

This sequence belongs to the EPSP synthase family. Monomer.

It is found in the cytoplasm. The catalysed reaction is 3-phosphoshikimate + phosphoenolpyruvate = 5-O-(1-carboxyvinyl)-3-phosphoshikimate + phosphate. Its pathway is metabolic intermediate biosynthesis; chorismate biosynthesis; chorismate from D-erythrose 4-phosphate and phosphoenolpyruvate: step 6/7. Functionally, catalyzes the transfer of the enolpyruvyl moiety of phosphoenolpyruvate (PEP) to the 5-hydroxyl of shikimate-3-phosphate (S3P) to produce enolpyruvyl shikimate-3-phosphate and inorganic phosphate. The polypeptide is 3-phosphoshikimate 1-carboxyvinyltransferase (Acidothermus cellulolyticus (strain ATCC 43068 / DSM 8971 / 11B)).